Here is a 420-residue protein sequence, read N- to C-terminus: MATSLGSNTYNRQNWEDADFPILCQTCLGENPYIRMTKEKYGKECKICARPFTVFRWCPGVRMRFKKTEVCQTCSKLKNVCQTCLLDLEYGLPIQVRDAGLSFKDDMPKSDVNKEYYTQNMEREISNSDGTRPVGMLGKATSTSDMLLKLARTTPYYKRNRPHICSFWVKGECKRGEECPYRHEKPTDPDDPLADQNIKDRYYGINDPVADKLLKRASTMPRLDPPEDKTITTLYVGGLGDTITETDLRNHFYQFGEIRTITVVQRQQCAFIQFATRQAAEVAAEKSFNKLIVNGRRLNVKWGRSQAARGKEKEKDGTTDSGIKLEPVPGLPGALPPPPAAEEEASANYFNLPPSGPPAVVNIALPPPPGIAPPPPPGFGPHMFHPMGPPPPFMRAPGPIHYPSQDPQRMGAHAGKHSSP.

Residue Ala2 is modified to N-acetylalanine. Residues Ser4 and Ser102 each carry the phosphoserine modification. Glycyl lysine isopeptide (Lys-Gly) (interchain with G-Cter in SUMO2) cross-links involve residues Lys139 and Lys149. A C3H1-type zinc finger spans residues 159–186 (RNRPHICSFWVKGECKRGEECPYRHEKP). Lys212 bears the N6-acetyllysine mark. An RRM domain is found at 232-305 (TTLYVGGLGD…RRLNVKWGRS (74 aa)). Lys290 is covalently cross-linked (Glycyl lysine isopeptide (Lys-Gly) (interchain with G-Cter in SUMO2)). Disordered stretches follow at residues 303-343 (GRSQ…AAEE) and 372-420 (APPP…HSSP). Over residues 309-318 (RGKEKEKDGT) the composition is skewed to basic and acidic residues.

This sequence belongs to the SLT11 family. Component of the pre-catalytic and catalytic spliceosome complexes. Component of the postcatalytic spliceosome P complex. Interacts with PDCD6; the interaction induces translocation of PDCD6 in the cytoplasm. Interacts with PPIL1.

The protein resides in the nucleus. It localises to the cytoplasm. In terms of biological role, required for pre-mRNA splicing as component of the activated spliceosome. Involved in the first step of pre-mRNA splicing. Binds directly to the internal stem-loop (ISL) domain of the U6 snRNA and to the pre-mRNA intron near the 5' splice site during the activation and catalytic phases of the spliceosome cycle. Involved in both translocations of the nuclear SLU7 to the cytoplasm and the cytosolic calcium-binding protein PDCD6 to the nucleus upon cellular stress responses. The protein is Pre-mRNA-splicing factor RBM22 (RBM22) of Homo sapiens (Human).